The primary structure comprises 93 residues: Small ribosomal subunit protein uS19 (93 aa).

This sequence belongs to the universal ribosomal protein uS19 family.

Protein S19 forms a complex with S13 that binds strongly to the 16S ribosomal RNA. This is Small ribosomal subunit protein uS19 from Caldanaerobacter subterraneus subsp. tengcongensis (strain DSM 15242 / JCM 11007 / NBRC 100824 / MB4) (Thermoanaerobacter tengcongensis).